The primary structure comprises 176 residues: Gamma-crystallin M2 (176 aa).

Beta/gamma crystallin 'Greek key' domains follow at residues 2 to 40 and 41 to 83; these read GKVI…RVEG and GCWV…RIIP. A connecting peptide region spans residues 84 to 88; sequence QYRGS. Beta/gamma crystallin 'Greek key' domains are found at residues 89–129 and 130–172; these read YRMR…HVMD and GYWI…RRIM.

Belongs to the beta/gamma-crystallin family. Monomer.

Functionally, crystallins are the dominant structural components of the vertebrate eye lens. The sequence is that of Gamma-crystallin M2 (GM2) from Chiloscyllium indicum (Slender bamboo shark).